Here is a 219-residue protein sequence, read N- to C-terminus: Large ribosomal subunit protein bL25 (219 aa).

Positions 194 to 219 are disordered; it reads SSTELEETPEVPASAVPTTDQGESAE. The span at 209-219 shows a compositional bias: polar residues; that stretch reads VPTTDQGESAE.

The protein belongs to the bacterial ribosomal protein bL25 family. CTC subfamily. Part of the 50S ribosomal subunit; part of the 5S rRNA/L5/L18/L25 subcomplex. Contacts the 5S rRNA. Binds to the 5S rRNA independently of L5 and L18.

This is one of the proteins that binds to the 5S RNA in the ribosome where it forms part of the central protuberance. In Legionella pneumophila (strain Paris), this protein is Large ribosomal subunit protein bL25.